The following is a 421-amino-acid chain: MFSPGTMVEVSSKINEGEVVWVPSMVIKEFKEDDEYKYIVKDKSFSCEGKKARPNKTVDLSSLRPIPVSVDEYQLEENVEVFLDGMGWRHGRVMGSQERAIGTLSQKWYFVRLESTKKQLTFKQSDLRPLKVWEDGVWKVLQTRELSFTQGSGDKTGDSVRNANESDPPLTPPPGIITPPLKQIEAGTQRKALSKKTLPRNQNGSGNDSTLENENSEDNNRKRKREENLGCVASVEQDKPKDTTMVLPFEKKLRIWETLESMEVFKTVPQSPHFSPLLVESREDSREMSAVGMMLTFFGLLDEVKALQHNDPISFFISLTNSFAELEKHGFNVKAPQSRINKLLSLRDRQSKKTEELKDAEKVTAEKESVKAENKRKILELQRLNEEMDKEIAQSKSCAAKIVQQLDDVKLEFLATASAPW.

2 stretches are compositionally biased toward polar residues: residues 149 to 165 (TQGS…NANE) and 199 to 213 (PRNQ…TLEN). The tract at residues 149 to 229 (TQGSGDKTGD…NRKRKREENL (81 aa)) is disordered. The 175-residue stretch at 246–420 (VLPFEKKLRI…LEFLATASAP (175 aa)) folds into the DUF724 domain. Positions 361 to 397 (EKVTAEKESVKAENKRKILELQRLNEEMDKEIAQSKS) form a coiled coil.

In terms of tissue distribution, expressed in leaves and flowers, and at lower levels in roots, stems and siliques.

The protein resides in the nucleus. Its function is as follows. May be involved in the polar growth of plant cells via transportation of RNAs. This Arabidopsis thaliana (Mouse-ear cress) protein is DUF724 domain-containing protein 8.